A 244-amino-acid chain; its full sequence is tRNA (guanine-N(1)-)-methyltransferase (244 aa).

S-adenosyl-L-methionine is bound by residues glycine 113 and 133-138 (IGDYVL).

This sequence belongs to the RNA methyltransferase TrmD family. As to quaternary structure, homodimer.

The protein resides in the cytoplasm. It catalyses the reaction guanosine(37) in tRNA + S-adenosyl-L-methionine = N(1)-methylguanosine(37) in tRNA + S-adenosyl-L-homocysteine + H(+). In terms of biological role, specifically methylates guanosine-37 in various tRNAs. In Bacillus cereus (strain G9842), this protein is tRNA (guanine-N(1)-)-methyltransferase.